The sequence spans 503 residues: Arabinose import ATP-binding protein AraG 1 (503 aa).

ABC transporter domains lie at 5 to 240 and 251 to 497; these read LRFD…MVGR and RALG…LPQT. 37–44 provides a ligand contact to ATP; that stretch reads GENGAGKS.

It belongs to the ABC transporter superfamily. Arabinose importer (TC 3.A.1.2.2) family. The complex is composed of two ATP-binding proteins (AraG), two transmembrane proteins (AraH) and a solute-binding protein (AraF).

It is found in the cell inner membrane. The enzyme catalyses L-arabinose(out) + ATP + H2O = L-arabinose(in) + ADP + phosphate + H(+). In terms of biological role, part of the ABC transporter complex AraFGH involved in arabinose import. Responsible for energy coupling to the transport system. The polypeptide is Arabinose import ATP-binding protein AraG 1 (Burkholderia ambifaria (strain ATCC BAA-244 / DSM 16087 / CCUG 44356 / LMG 19182 / AMMD) (Burkholderia cepacia (strain AMMD))).